Consider the following 766-residue polypeptide: Protein zer-1 homolog (766 aa).

N-acetylalanine is present on Ala-2. 3 LRR repeats span residues 226-245, 246-268, and 278-302; these read SLVL…IVQL, HKLR…KLTR, and LGNL…KMEE. ARM repeat units lie at residues 427–467, 511–556, 558–600, 602–643, and 714–756; these read RSEQ…NFGI, DNDH…NITD, TPDN…NVAE, KELR…HIMF, and PDKY…HCSN.

This sequence belongs to the zyg-11 family. As to quaternary structure, interacts with the ELOC-ELOB/Elongin BC complex. Part of an E3 ubiquitin ligase complex including ZER1, CUL2 and Elongin BC.

Its function is as follows. Serves as substrate adapter subunit in the E3 ubiquitin ligase complex ZYG11B-CUL2-Elongin BC. Acts redudantly with ZYG11B to target substrates bearing N-terminal glycine degrons for proteasomal degradation. Involved in the clearance of proteolytic fragments generated by caspase cleavage during apoptosis since N-terminal glycine degrons are strongly enriched at caspase cleavage sites. Also important in the quality control of protein N-myristoylation in which N-terminal glycine degrons are conditionally exposed after a failure of N-myristoylation. The protein is Protein zer-1 homolog (ZER1) of Pongo abelii (Sumatran orangutan).